Reading from the N-terminus, the 1013-residue chain is Zinc finger and BTB domain-containing protein 4 (1013 aa).

In terms of domain architecture, BTB spans Cys30–Gly152. Residue Lys40 forms a Glycyl lysine isopeptide (Lys-Gly) (interchain with G-Cter in SUMO2) linkage. Over residues Leu67–Ser110 the composition is skewed to low complexity. Disordered regions lie at residues Leu67–Arg124 and Asp183–Gln221. Pro residues predominate over residues Ser111–Ser121. The interval Val186 to Leu348 is interaction with CBFA2T3. Residues Leu234–Cys256 form a C2H2-type 1; atypical zinc finger. Residues Arg257–Val281 are disordered. Gly residues predominate over residues Thr266–Ala279. 3 consecutive C2H2-type zinc fingers follow at residues Tyr309–His331, Tyr337–His359, and Tyr365–His388. Ser391 carries the phosphoserine modification. 4 disordered regions span residues Lys428–Phe765, His783–Ile852, Gly883–Gly904, and Val972–Gly1013. Positions Ala453–Ser470 are enriched in pro residues. Composition is skewed to low complexity over residues Thr496–Ser506 and Ala531–Thr554. Residue Lys573 forms a Glycyl lysine isopeptide (Lys-Gly) (interchain with G-Cter in SUMO2) linkage. Residues Gly576–Arg590 show a composition bias toward gly residues. The segment covering Ile608–Pro625 has biased composition (basic and acidic residues). Lys615 is covalently cross-linked (Glycyl lysine isopeptide (Lys-Gly) (interchain with G-Cter in SUMO2)). Residues Glu627–Leu663 are a coiled coil. Positions Ser629 to Glu654 are enriched in acidic residues. Residues Ala678 to Leu689 show a composition bias toward gly residues. C2H2-type zinc fingers lie at residues His726–His748 and Phe765–His787. Phosphothreonine; by HIPK2 is present on residues Thr795 and Thr797. Residues Thr836 to Ser846 are compositionally biased toward low complexity. Residues Gly883–Gly902 are compositionally biased toward gly residues. The span at Ala976–Pro995 shows a compositional bias: pro residues. Thr983 is modified (phosphothreonine; by HIPK2). Positions Gly997 to Gly1013 are enriched in basic and acidic residues.

In terms of assembly, interacts with HIPK2. Interacts with CBFA2T3. Interacts with ZBTB38. In terms of processing, phosphorylated by HIPK2. This phosphorylation reduces stability and triggers ZBTB4 protein degradation in response to DNA damage.

It localises to the nucleus. The protein localises to the chromosome. Functionally, transcriptional repressor with bimodal DNA-binding specificity. Represses transcription in a methyl-CpG-dependent manner. Binds with a higher affinity to methylated CpG dinucleotides in the consensus sequence 5'-CGCG-3' but can also bind to the non-methylated consensus sequence 5'-CTGCNA-3' also known as the consensus kaiso binding site (KBS). Can also bind specifically to a single methyl-CpG pair and can bind hemimethylated DNA but with a lower affinity compared to methylated DNA. Plays a role in postnatal myogenesis, may be involved in the regulation of satellite cells self-renewal. This is Zinc finger and BTB domain-containing protein 4 (ZBTB4) from Homo sapiens (Human).